The following is a 517-amino-acid chain: 2-isopropylmalate synthase (517 aa).

A Pyruvate carboxyltransferase domain is found at 6–267 (IIVFDTTLRD…YTTINTPEIY (262 aa)). The Mn(2+) site is built by Asp15, His201, His203, and Asn237. The segment at 393 to 517 (DLIGLQISDC…RLSKSSEHQV (125 aa)) is regulatory domain.

The protein belongs to the alpha-IPM synthase/homocitrate synthase family. LeuA type 1 subfamily. In terms of assembly, homodimer. Requires Mn(2+) as cofactor.

It localises to the cytoplasm. The catalysed reaction is 3-methyl-2-oxobutanoate + acetyl-CoA + H2O = (2S)-2-isopropylmalate + CoA + H(+). It functions in the pathway amino-acid biosynthesis; L-leucine biosynthesis; L-leucine from 3-methyl-2-oxobutanoate: step 1/4. Catalyzes the condensation of the acetyl group of acetyl-CoA with 3-methyl-2-oxobutanoate (2-ketoisovalerate) to form 3-carboxy-3-hydroxy-4-methylpentanoate (2-isopropylmalate). This chain is 2-isopropylmalate synthase, found in Aliarcobacter butzleri (strain RM4018) (Arcobacter butzleri).